Here is a 379-residue protein sequence, read N- to C-terminus: Probable RNA 3'-terminal phosphate cyclase-like protein (379 aa).

This sequence belongs to the RNA 3'-terminal cyclase family. Type 2 subfamily. As to quaternary structure, part of the small subunit (SSU) processome, composed of more than 70 proteins and the RNA chaperone small nucleolar RNA (snoRNA) U3.

The protein localises to the nucleus. It is found in the nucleolus. Its function is as follows. Part of the small subunit (SSU) processome, first precursor of the small eukaryotic ribosomal subunit. During the assembly of the SSU processome in the nucleolus, many ribosome biogenesis factors, an RNA chaperone and ribosomal proteins associate with the nascent pre-rRNA and work in concert to generate RNA folding, modifications, rearrangements and cleavage as well as targeted degradation of pre-ribosomal RNA by the RNA exosome. Does not have cyclase activity. The polypeptide is Probable RNA 3'-terminal phosphate cyclase-like protein (Caenorhabditis elegans).